Reading from the N-terminus, the 647-residue chain is MAGAPLIRLEDICKTFHNGDLAVEVLHGITLDIRAGEFVAIMGASGSGKSTLMNILGCLDTPTGGRYLLDGEDVSTLNADELATLRRRTFGFVFQSYNLIPTSTAQENVEVPAIYAGTPAAERRKRAAALLNALKLGDRLDHRPSQLSGGQQQRVSIARALMNGGRIILADEPTGALDSQSGEDVMELLRSMHQQGHTVIVITHAREVAERADRLIEIRDGQILSDTTKRDIHTPEATLQPHEEIAGNGAHIADISEAVKMALRALRANIFRTVLTLLGIIIGVSSVVTMLAIGTGAQNTILDRINAMGTDLILVRPAMAGFRGSGSIATLVPQDADAILELPNVKSAVPEVTGTVTLRRGNVDYQSQANGTVPAFSLSEIVESRQRQLHHPERYRYLRPCGWLGTTVVKTLFPDGSNPVGDYILIQKIPFQIIGTLEPKGAGFGGSDQDDVVVVPLSTGNLRLFGQKYVRSITVQVKDSSLIDTTQNQIQSLLDQRHKKRDTMITNMSSVREDAAAMGKTMTVFLGSVAAISLLVGGIGVMNIMLVSVTERTREIGVRMATGARRRDILLQFIIEALSVSAIGGAIGVILGLGAAALASWAGLSVGYSFGPVLLAFACAFATGLIFGFLPARKASRLLPAVALSSE.

The ABC transporter domain occupies 7-245 (IRLEDICKTF…EATLQPHEEI (239 aa)). 43–50 (GASGSGKS) provides a ligand contact to ATP. 4 consecutive transmembrane segments (helical) span residues 274–294 (VLTL…LAIG), 529–549 (VAAI…LVSV), 573–593 (FIIE…ILGL), and 610–630 (FGPV…FGFL).

Belongs to the ABC transporter superfamily. Macrolide exporter (TC 3.A.1.122) family. Homodimer.

It localises to the cell inner membrane. Its function is as follows. Non-canonical ABC transporter that contains transmembrane domains (TMD), which form a pore in the inner membrane, and an ATP-binding domain (NBD), which is responsible for energy generation. Confers resistance against macrolides. The protein is Macrolide export ATP-binding/permease protein MacB of Brucella melitensis biotype 1 (strain ATCC 23456 / CCUG 17765 / NCTC 10094 / 16M).